The sequence spans 185 residues: Inner membrane-spanning protein YciB (185 aa).

5 helical membrane-spanning segments follow: residues 19 to 39 (IHGI…LMAW), 49 to 69 (TMTW…LYFH), 72 to 92 (TFIK…LLFT), 122 to 142 (GYWI…AYAF), and 150 to 170 (FKLF…AVVI).

Belongs to the YciB family.

Its subcellular location is the cell inner membrane. Plays a role in cell envelope biogenesis, maintenance of cell envelope integrity and membrane homeostasis. This chain is Inner membrane-spanning protein YciB, found in Acidithiobacillus ferrooxidans (strain ATCC 23270 / DSM 14882 / CIP 104768 / NCIMB 8455) (Ferrobacillus ferrooxidans (strain ATCC 23270)).